Reading from the N-terminus, the 159-residue chain is G-protein-signaling modulator 3 (159 aa).

Positions 1–54 (MEAERPQEEDGEQSLPQDDQGWPPVNATARPWRSAPPSPPPPGTRHTALGPRSG) are disordered. Phosphoserine occurs at positions 34, 38, 55, and 58. Positions 34–43 (SAPPSPPPPG) are enriched in pro residues. Thr-61 is subject to Phosphothreonine. A GoLoco 1 domain is found at 61 to 83 (TELLLDLVAEAQSRRLEEQRATF). Residues 77 to 97 (EEQRATFHTPEAPPNLAPAPP) are disordered. The segment covering 87 to 97 (EAPPNLAPAPP) has biased composition (pro residues). GoLoco domains follow at residues 103-125 (KEQLYSTILSHQCQRIEAQRSDP) and 131-154 (GQELLELLLRVQGGGRMEEQRSRP).

It is found in the cytoplasm. Its function is as follows. Interacts with subunit of G(i) alpha proteins and regulates the activation of G(i) alpha proteins. The polypeptide is G-protein-signaling modulator 3 (Gpsm3) (Mus musculus (Mouse)).